A 228-amino-acid chain; its full sequence is DNA mismatch repair protein MutH (228 aa).

The protein belongs to the MutH family.

Its subcellular location is the cytoplasm. In terms of biological role, sequence-specific endonuclease that cleaves unmethylated GATC sequences. It is involved in DNA mismatch repair. This is DNA mismatch repair protein MutH from Yersinia enterocolitica serotype O:8 / biotype 1B (strain NCTC 13174 / 8081).